Reading from the N-terminus, the 804-residue chain is Probable replication endonuclease from prophage-like region (804 aa).

Active-site O-(5'-phospho-DNA)-tyrosine intermediate residues include tyrosine 498 and tyrosine 502.

This sequence belongs to the phage GPA family.

In terms of biological role, possible endonuclease which induces a single-strand cut and initiates DNA replication. The protein is Probable replication endonuclease from prophage-like region of Escherichia coli O6:H1 (strain CFT073 / ATCC 700928 / UPEC).